The primary structure comprises 816 residues: Bifunctional aspartokinase/homoserine dehydrogenase (816 aa).

The segment at 1–250 (MKLLKFGGTS…VPNARLLKSI (250 aa)) is aspartokinase. The interval 251 to 471 (SYQEAMELSY…FNKKTIHMFL (221 aa)) is interface. Residues 402 to 479 (IVGSNIYKKH…FLIGIGGIGS (78 aa)) form the ACT domain. The homoserine dehydrogenase stretch occupies residues 472-816 (IGIGGIGSTL…VFSDLLRTLS (345 aa)). Residues glycine 476, isoleucine 477, and alanine 505 each contribute to the NAD(+) site. Isoleucine 477 contacts NADP(+). Isoleucine 477 provides a ligand contact to NADPH. The NADP(+) site is built by lysine 508 and threonine 556. Threonine 556 is an NAD(+) binding site. Positions 556, 557, 578, and 580 each coordinate NADPH. Serine 578 and lysine 580 together coordinate NADP(+). Na(+) contacts are provided by glutamate 607, valine 610, alanine 612, and leucine 614. Positions 665 and 668 each coordinate NADP(+). L-homoserine is bound by residues glutamate 668 and aspartate 679. The Proton donor role is filled by lysine 683. Residue glycine 799 participates in NAD(+) binding. Residue glycine 799 coordinates NADP(+). Glycine 799 serves as a coordination point for NADPH.

The protein in the N-terminal section; belongs to the aspartokinase family. This sequence in the C-terminal section; belongs to the homoserine dehydrogenase family. As to quaternary structure, homotetramer. It depends on a metal cation as a cofactor.

The enzyme catalyses L-homoserine + NADP(+) = L-aspartate 4-semialdehyde + NADPH + H(+). It carries out the reaction L-homoserine + NAD(+) = L-aspartate 4-semialdehyde + NADH + H(+). It catalyses the reaction L-aspartate + ATP = 4-phospho-L-aspartate + ADP. The protein operates within amino-acid biosynthesis; L-lysine biosynthesis via DAP pathway; (S)-tetrahydrodipicolinate from L-aspartate: step 1/4. Its pathway is amino-acid biosynthesis; L-methionine biosynthesis via de novo pathway; L-homoserine from L-aspartate: step 1/3. It participates in amino-acid biosynthesis; L-methionine biosynthesis via de novo pathway; L-homoserine from L-aspartate: step 3/3. It functions in the pathway amino-acid biosynthesis; L-threonine biosynthesis; L-threonine from L-aspartate: step 1/5. The protein operates within amino-acid biosynthesis; L-threonine biosynthesis; L-threonine from L-aspartate: step 3/5. Its function is as follows. Bifunctional aspartate kinase and homoserine dehydrogenase that catalyzes the first and the third steps toward the synthesis of lysine, methionine and threonine from aspartate. This chain is Bifunctional aspartokinase/homoserine dehydrogenase (thrA), found in Buchnera aphidicola subsp. Acyrthosiphon pisum (strain APS) (Acyrthosiphon pisum symbiotic bacterium).